The sequence spans 472 residues: Protein c-ets-2-B (472 aa).

Residues 85 to 170 (DTFNGFAKER…EHLEEMMKEY (86 aa)) form the PNT domain. Positions 366 to 446 (IQLWQFLLEL…SGKRYVYRFV (81 aa)) form a DNA-binding region, ETS.

Belongs to the ETS family.

The protein resides in the nucleus. In terms of biological role, probable transcription factor. The chain is Protein c-ets-2-B (ets2-b) from Xenopus laevis (African clawed frog).